A 255-amino-acid polypeptide reads, in one-letter code: Phycoerythrobilin:ferredoxin oxidoreductase (255 aa).

It belongs to the HY2 family.

The enzyme catalyses (3Z)-phycoerythrobilin + oxidized 2[4Fe-4S]-[ferredoxin] = 15,16-dihydrobiliverdin + reduced 2[4Fe-4S]-[ferredoxin] + 2 H(+). Functionally, catalyzes the two-electron reduction of the C2 and C3(1) diene system of 15,16-dihydrobiliverdin. This is Phycoerythrobilin:ferredoxin oxidoreductase (pebB) from Nostoc punctiforme (strain ATCC 29133 / PCC 73102).